A 173-amino-acid polypeptide reads, in one-letter code: Crossover junction endodeoxyribonuclease RuvC (173 aa).

Catalysis depends on residues aspartate 8, glutamate 67, and aspartate 139. Aspartate 8, glutamate 67, and aspartate 139 together coordinate Mg(2+).

The protein belongs to the RuvC family. As to quaternary structure, homodimer which binds Holliday junction (HJ) DNA. The HJ becomes 2-fold symmetrical on binding to RuvC with unstacked arms; it has a different conformation from HJ DNA in complex with RuvA. In the full resolvosome a probable DNA-RuvA(4)-RuvB(12)-RuvC(2) complex forms which resolves the HJ. Mg(2+) serves as cofactor.

The protein resides in the cytoplasm. The enzyme catalyses Endonucleolytic cleavage at a junction such as a reciprocal single-stranded crossover between two homologous DNA duplexes (Holliday junction).. Functionally, the RuvA-RuvB-RuvC complex processes Holliday junction (HJ) DNA during genetic recombination and DNA repair. Endonuclease that resolves HJ intermediates. Cleaves cruciform DNA by making single-stranded nicks across the HJ at symmetrical positions within the homologous arms, yielding a 5'-phosphate and a 3'-hydroxyl group; requires a central core of homology in the junction. The consensus cleavage sequence is 5'-(A/T)TT(C/G)-3'. Cleavage occurs on the 3'-side of the TT dinucleotide at the point of strand exchange. HJ branch migration catalyzed by RuvA-RuvB allows RuvC to scan DNA until it finds its consensus sequence, where it cleaves and resolves the cruciform DNA. This Shewanella woodyi (strain ATCC 51908 / MS32) protein is Crossover junction endodeoxyribonuclease RuvC.